We begin with the raw amino-acid sequence, 326 residues long: ELMO domain-containing protein 1 (326 aa).

The 174-residue stretch at Gln133 to Leu306 folds into the ELMO domain.

In terms of biological role, acts as a GTPase-activating protein (GAP) toward guanine nucleotide exchange factors like ARL2, ARL3, ARF1 and ARF6, but not for GTPases outside the Arf family. The protein is ELMO domain-containing protein 1 (Elmod1) of Mus musculus (Mouse).